We begin with the raw amino-acid sequence, 387 residues long: S-adenosylmethionine synthase (387 aa).

Position 16 (His-16) interacts with ATP. Mg(2+) is bound at residue Asp-18. Glu-44 provides a ligand contact to K(+). Positions 57 and 100 each coordinate L-methionine. The tract at residues 100 to 110 (QSADIAVGVDE) is flexible loop. ATP contacts are provided by residues 165–167 (DAK), Asp-241, 247–248 (RK), Ala-264, and Lys-268. Asp-241 is an L-methionine binding site. Lys-272 contributes to the L-methionine binding site.

It belongs to the AdoMet synthase family. As to quaternary structure, homotetramer; dimer of dimers. Requires Mg(2+) as cofactor. K(+) is required as a cofactor.

The protein resides in the cytoplasm. It carries out the reaction L-methionine + ATP + H2O = S-adenosyl-L-methionine + phosphate + diphosphate. The protein operates within amino-acid biosynthesis; S-adenosyl-L-methionine biosynthesis; S-adenosyl-L-methionine from L-methionine: step 1/1. Its function is as follows. Catalyzes the formation of S-adenosylmethionine (AdoMet) from methionine and ATP. The overall synthetic reaction is composed of two sequential steps, AdoMet formation and the subsequent tripolyphosphate hydrolysis which occurs prior to release of AdoMet from the enzyme. This Marinomonas sp. (strain MWYL1) protein is S-adenosylmethionine synthase.